A 159-amino-acid polypeptide reads, in one-letter code: Putative pre-16S rRNA nuclease (159 aa).

The protein belongs to the YqgF nuclease family.

It is found in the cytoplasm. Its function is as follows. Could be a nuclease involved in processing of the 5'-end of pre-16S rRNA. The polypeptide is Putative pre-16S rRNA nuclease (Bartonella henselae (strain ATCC 49882 / DSM 28221 / CCUG 30454 / Houston 1) (Rochalimaea henselae)).